Here is a 529-residue protein sequence, read N- to C-terminus: Phospholipase A1-Igamma2, chloroplastic (529 aa).

The N-terminal 43 residues, 1 to 43, are a transit peptide targeting the chloroplast; sequence MAAIPSHNNLLTINHKNSITGSSSLNTNFSEINFPAKFRVATR. A GXSXG motif is present at residues 316–320; the sequence is GHSLG. Serine 318 (acyl-ester intermediate) is an active-site residue. Active-site charge relay system residues include aspartate 381 and histidine 437.

Belongs to the AB hydrolase superfamily. Lipase family. In terms of assembly, interacts with SBP1. Widely expressed. Highly expressed in leaves and stems.

Its subcellular location is the plastid. The protein localises to the chloroplast. The catalysed reaction is 1,2-dihexadecanoyl-sn-glycero-3-phosphocholine + H2O = 2-hexadecanoyl-sn-glycero-3-phosphocholine + hexadecanoate + H(+). The enzyme catalyses a 1,2-diacyl-3-O-(beta-D-galactosyl)-sn-glycerol + H2O = an acyl-3-O-(beta-D-galactosyl)-sn-glycerol + a fatty acid + H(+). It carries out the reaction a 1,2-diacyl-3-O-[alpha-D-galactosyl-(1-&gt;6)-beta-D-galactosyl]-sn-glycerol + H2O = acyl-3-O-[alpha-D-galactosyl-(1-&gt;6)-beta-D-galactosyl]-sn-glycerol + a fatty acid + H(+). It catalyses the reaction a triacylglycerol + H2O = a diacylglycerol + a fatty acid + H(+). Its function is as follows. Acylhydrolase with broad specificity. Catalyzes the hydrolysis of phosphatidylcholine at the sn-1 position. Possesses moderate activity toward phosphatidylcholine (PC), monogalactosyldiacylglycerol (MGDG), digalactosyldiacylglycerol (DGDG) and triacylglycerol (TAG). The sequence is that of Phospholipase A1-Igamma2, chloroplastic from Arabidopsis thaliana (Mouse-ear cress).